Here is a 256-residue protein sequence, read N- to C-terminus: (R)-S-adenosyl-L-methionine hydrolase (256 aa).

Residues D7, H41, D68, and N183 each contribute to the adenosine site. Residues N183, Y212, S226, E231, V234, and M236 each contribute to the (R)-S-adenosyl-L-methionine site. An adenosine-binding site is contributed by V234.

This sequence belongs to the SAM hydrolase / SAM-dependent halogenase family. In terms of assembly, homotrimer.

It catalyses the reaction (R)-S-adenosyl-L-methionine + H2O = adenosine + L-methionine + H(+). In terms of biological role, catalyzes the hydrolysis of S-adenosyl-L-methionine (SAM) into adenosine and L-methionine. Is likely stereoselective, specifically hydrolyzing (R)-S-adenosyl-L-methionine ((R)-SAM), the inactive form of the ubiquitous cofactor SAM, and not the active form of SAM, (S)-S-adenosyl-L-methionine. Probaly plays a role in preventing accumulation of (R)-S-adenosyl-L-methionine in cells; maintenance of (S)-S-denosyl-L-methionine homochirality is important for cellular health given that the (R)-form is largely inactive as a methyl donor and can function as an inhibitor of methyltransferases. Is unable to mediate a fluorination or chlorination reaction with SAM. The chain is (R)-S-adenosyl-L-methionine hydrolase from Pyrococcus horikoshii (strain ATCC 700860 / DSM 12428 / JCM 9974 / NBRC 100139 / OT-3).